Consider the following 406-residue polypeptide: Probable endo-xylogalacturonan hydrolase A (406 aa).

The first 18 residues, 1–18 (MISLNSIFLLSLVGLSRA), serve as a signal peptide directing secretion. Residues 20–49 (PSRSETSPDRTIKPRAACTPTAGGSSSTDD) are disordered. PbH1 repeat units follow at residues 183–213 (TSNA…DIGA), 214–235 (STYV…AFKP), 237–257 (ANYV…SVGS), 266–289 (VQNV…KTYP), 299–320 (VKNA…QIQS), and 368–390 (TCDV…ILCG). The active-site Proton donor is D228. An N-linked (GlcNAc...) asparagine glycan is attached at N244. The active site involves H251. N-linked (GlcNAc...) asparagine glycosylation is found at N273, N278, and N301.

It belongs to the glycosyl hydrolase 28 family.

The protein resides in the secreted. Its function is as follows. Pectinolytic enzyme involved in the degradation of xylogalacturonan (xga), a galacturonan backbone heavily substituted with xylose, and which is one important component of the hairy regions of pectin. Activity requires a galacturonic acid backbone substituted with xylose. The protein is Probable endo-xylogalacturonan hydrolase A (xghA) of Aspergillus flavus (strain ATCC 200026 / FGSC A1120 / IAM 13836 / NRRL 3357 / JCM 12722 / SRRC 167).